We begin with the raw amino-acid sequence, 151 residues long: Transcriptional regulator MraZ (151 aa).

SpoVT-AbrB domains lie at 5-52 (ATAV…PLDE) and 81-124 (ATEC…SDVE).

This sequence belongs to the MraZ family. Forms oligomers.

It localises to the cytoplasm. The protein localises to the nucleoid. This chain is Transcriptional regulator MraZ, found in Haemophilus influenzae (strain 86-028NP).